The sequence spans 352 residues: Photosystem II D2 protein (352 aa).

T2 carries the N-acetylthreonine modification. T2 is modified (phosphothreonine). The chain crosses the membrane as a helical span at residues 40 to 60 (TAYLALGGWLTGTTFVTSWYT). H117 contacts chlorophyll a. The helical transmembrane segment at 124–140 (GFMLRQFEIARSVKLRP) threads the bilayer. Q129 and N142 together coordinate pheophytin a. A helical membrane pass occupies residues 152–165 (VFVSVFLIYPLGQS). Position 197 (H197) interacts with chlorophyll a. Residues 207-227 (AALLCAIHGATVENTLFEDGD) traverse the membrane as a helical segment. H214 and F261 together coordinate a plastoquinone. H214 provides a ligand contact to Fe cation. H268 lines the Fe cation pocket. A helical membrane pass occupies residues 278–294 (GLWMSALGVVGLALNLR).

This sequence belongs to the reaction center PufL/M/PsbA/D family. In terms of assembly, PSII is composed of 1 copy each of membrane proteins PsbA, PsbB, PsbC, PsbD, PsbE, PsbF, PsbH, PsbI, PsbJ, PsbK, PsbL, PsbM, PsbT, PsbX, PsbY, PsbZ, Psb30/Ycf12, at least 3 peripheral proteins of the oxygen-evolving complex and a large number of cofactors. It forms dimeric complexes. The D1/D2 heterodimer binds P680, chlorophylls that are the primary electron donor of PSII, and subsequent electron acceptors. It shares a non-heme iron and each subunit binds pheophytin, quinone, additional chlorophylls, carotenoids and lipids. There is also a Cl(-1) ion associated with D1 and D2, which is required for oxygen evolution. The PSII complex binds additional chlorophylls, carotenoids and specific lipids. is required as a cofactor.

The protein resides in the plastid. It localises to the chloroplast thylakoid membrane. It carries out the reaction 2 a plastoquinone + 4 hnu + 2 H2O = 2 a plastoquinol + O2. Photosystem II (PSII) is a light-driven water:plastoquinone oxidoreductase that uses light energy to abstract electrons from H(2)O, generating O(2) and a proton gradient subsequently used for ATP formation. It consists of a core antenna complex that captures photons, and an electron transfer chain that converts photonic excitation into a charge separation. The D1/D2 (PsbA/PsbD) reaction center heterodimer binds P680, the primary electron donor of PSII as well as several subsequent electron acceptors. D2 is needed for assembly of a stable PSII complex. The protein is Photosystem II D2 protein of Pleurastrum terricola (Filamentous green alga).